Reading from the N-terminus, the 351-residue chain is sn-glycerol-3-phosphate import ATP-binding protein UgpC (351 aa).

The ABC transporter domain maps to 4-234 (ITLDNLVKAY…PATTFVAGFI (231 aa)). Residue 36 to 43 (GPSGCGKS) coordinates ATP.

The protein belongs to the ABC transporter superfamily. sn-glycerol-3-phosphate importer (TC 3.A.1.1.3) family. The complex is composed of two ATP-binding proteins (UgpC), two transmembrane proteins (UgpA and UgpE) and a solute-binding protein (UgpB).

Its subcellular location is the cell inner membrane. The enzyme catalyses sn-glycerol 3-phosphate(out) + ATP + H2O = sn-glycerol 3-phosphate(in) + ADP + phosphate + H(+). In terms of biological role, part of the ABC transporter complex UgpBAEC involved in sn-glycerol-3-phosphate (G3P) import. Responsible for energy coupling to the transport system. This Ruegeria pomeroyi (strain ATCC 700808 / DSM 15171 / DSS-3) (Silicibacter pomeroyi) protein is sn-glycerol-3-phosphate import ATP-binding protein UgpC.